A 308-amino-acid polypeptide reads, in one-letter code: Probable pyridoxal 5'-phosphate synthase subunit pdx-1 (308 aa).

Aspartate 30 contributes to the D-ribose 5-phosphate binding site. Catalysis depends on lysine 87, which acts as the Schiff-base intermediate with D-ribose 5-phosphate. D-ribose 5-phosphate is bound at residue glycine 159. Residue arginine 171 coordinates D-glyceraldehyde 3-phosphate. Residues glycine 224 and 245–246 (GS) each bind D-ribose 5-phosphate.

This sequence belongs to the PdxS/SNZ family.

The catalysed reaction is aldehydo-D-ribose 5-phosphate + D-glyceraldehyde 3-phosphate + L-glutamine = pyridoxal 5'-phosphate + L-glutamate + phosphate + 3 H2O + H(+). It participates in cofactor biosynthesis; pyridoxal 5'-phosphate biosynthesis. Functionally, catalyzes the formation of pyridoxal 5'-phosphate from ribose 5-phosphate (RBP), glyceraldehyde 3-phosphate (G3P) and ammonia. The ammonia is provided by pdx-2. Can also use ribulose 5-phosphate and dihydroxyacetone phosphate as substrates, resulting from enzyme-catalyzed isomerization of RBP and G3P, respectively. Also plays an indirect role in resistance to singlet oxygen-generating photosensitizers. The sequence is that of Probable pyridoxal 5'-phosphate synthase subunit pdx-1 (pdx-1) from Neurospora crassa (strain ATCC 24698 / 74-OR23-1A / CBS 708.71 / DSM 1257 / FGSC 987).